A 291-amino-acid chain; its full sequence is Tryptophan synthase alpha chain (291 aa).

Catalysis depends on proton acceptor residues E69 and D80.

This sequence belongs to the TrpA family. Tetramer of two alpha and two beta chains.

It catalyses the reaction (1S,2R)-1-C-(indol-3-yl)glycerol 3-phosphate + L-serine = D-glyceraldehyde 3-phosphate + L-tryptophan + H2O. It participates in amino-acid biosynthesis; L-tryptophan biosynthesis; L-tryptophan from chorismate: step 5/5. In terms of biological role, the alpha subunit is responsible for the aldol cleavage of indoleglycerol phosphate to indole and glyceraldehyde 3-phosphate. This is Tryptophan synthase alpha chain from Bifidobacterium longum (strain NCC 2705).